A 360-amino-acid polypeptide reads, in one-letter code: Phospho-N-acetylmuramoyl-pentapeptide-transferase (360 aa).

The next 10 membrane-spanning stretches (helical) occupy residues 26 to 46 (GVLA…FFIA), 70 to 90 (GTPT…TLLW), 94 to 114 (GNPL…IGFV), 136 to 156 (LQSL…SNPV), 164 to 184 (FIPH…YFVI), 199 to 219 (GLAI…AYVS), 236 to 256 (SGQM…FLWF), 263 to 283 (VFMG…VAIV), 289 to 309 (VLFI…IQVV), and 339 to 359 (AVRF…SLKI).

It belongs to the glycosyltransferase 4 family. MraY subfamily. Mg(2+) is required as a cofactor.

The protein resides in the cell inner membrane. It catalyses the reaction UDP-N-acetyl-alpha-D-muramoyl-L-alanyl-gamma-D-glutamyl-meso-2,6-diaminopimeloyl-D-alanyl-D-alanine + di-trans,octa-cis-undecaprenyl phosphate = di-trans,octa-cis-undecaprenyl diphospho-N-acetyl-alpha-D-muramoyl-L-alanyl-D-glutamyl-meso-2,6-diaminopimeloyl-D-alanyl-D-alanine + UMP. Its pathway is cell wall biogenesis; peptidoglycan biosynthesis. Its function is as follows. Catalyzes the initial step of the lipid cycle reactions in the biosynthesis of the cell wall peptidoglycan: transfers peptidoglycan precursor phospho-MurNAc-pentapeptide from UDP-MurNAc-pentapeptide onto the lipid carrier undecaprenyl phosphate, yielding undecaprenyl-pyrophosphoryl-MurNAc-pentapeptide, known as lipid I. This Acidithiobacillus ferrooxidans (strain ATCC 23270 / DSM 14882 / CIP 104768 / NCIMB 8455) (Ferrobacillus ferrooxidans (strain ATCC 23270)) protein is Phospho-N-acetylmuramoyl-pentapeptide-transferase.